We begin with the raw amino-acid sequence, 182 residues long: Large ribosomal subunit protein uL6 (182 aa).

It belongs to the universal ribosomal protein uL6 family. Part of the 50S ribosomal subunit.

Functionally, this protein binds to the 23S rRNA, and is important in its secondary structure. It is located near the subunit interface in the base of the L7/L12 stalk, and near the tRNA binding site of the peptidyltransferase center. This Methanococcus maripaludis (strain C5 / ATCC BAA-1333) protein is Large ribosomal subunit protein uL6.